Consider the following 358-residue polypeptide: Putative zinc metalloprotease BH06270 (358 aa).

His-7 contributes to the Zn(2+) binding site. Glu-8 is an active-site residue. A Zn(2+)-binding site is contributed by His-11. A run of 3 helical transmembrane segments spans residues 89-111 (ATVFAGPLFNVLFTVVILTFFFF), 282-304 (FLSLLNFTAFLSIGVGLINLFPI), and 332-354 (IIFRLGLCFVLLFMFFALFNDYF). One can recognise a PDZ domain in the interval 102–177 (TVVILTFFFF…IEFKMERSGQ (76 aa)).

This sequence belongs to the peptidase M50B family. Requires Zn(2+) as cofactor.

Its subcellular location is the cell inner membrane. The protein is Putative zinc metalloprotease BH06270 of Bartonella henselae (strain ATCC 49882 / DSM 28221 / CCUG 30454 / Houston 1) (Rochalimaea henselae).